Consider the following 845-residue polypeptide: Beta-galactosidase 11 (845 aa).

Positions 1-26 are cleaved as a signal peptide; sequence MRKHSLDRWLLTAVLVVLLSSSSSFA. A glycan (N-linked (GlcNAc...) asparagine) is linked at Asn-104. The active-site Proton donor is the Glu-197. Glu-268 acts as the Nucleophile in catalysis. N-linked (GlcNAc...) asparagine glycans are attached at residues Asn-269, Asn-300, Asn-395, Asn-752, Asn-784, and Asn-814. The 90-residue stretch at 751–840 folds into the SUEL-type lectin domain; the sequence is DNVSLTATLK…KMLAVQVKCG (90 aa).

It belongs to the glycosyl hydrolase 35 family.

The protein localises to the secreted. Its subcellular location is the extracellular space. The protein resides in the apoplast. It carries out the reaction Hydrolysis of terminal non-reducing beta-D-galactose residues in beta-D-galactosides.. This chain is Beta-galactosidase 11 (BGAL11), found in Arabidopsis thaliana (Mouse-ear cress).